Consider the following 286-residue polypeptide: D-tagatose-1,6-bisphosphate aldolase subunit KbaY (286 aa).

Asp82 serves as the catalytic Proton donor. Residues His83 and His180 each coordinate Zn(2+). Gly181 contacts dihydroxyacetone phosphate. Residue His208 coordinates Zn(2+). Dihydroxyacetone phosphate contacts are provided by residues 209-211 and 230-233; these read GAS and NVAT.

Belongs to the class II fructose-bisphosphate aldolase family. TagBP aldolase KbaY subfamily. In terms of assembly, homotetramer. Forms a complex with KbaZ. It depends on Zn(2+) as a cofactor.

It catalyses the reaction D-tagatofuranose 1,6-bisphosphate = D-glyceraldehyde 3-phosphate + dihydroxyacetone phosphate. It participates in carbohydrate metabolism; D-tagatose 6-phosphate degradation; D-glyceraldehyde 3-phosphate and glycerone phosphate from D-tagatose 6-phosphate: step 2/2. In terms of biological role, catalytic subunit of the tagatose-1,6-bisphosphate aldolase KbaYZ, which catalyzes the reversible aldol condensation of dihydroxyacetone phosphate (DHAP or glycerone-phosphate) with glyceraldehyde 3-phosphate (G3P) to produce tagatose 1,6-bisphosphate (TBP). Requires KbaZ subunit for full activity and stability. Is involved in the catabolism of N-acetylgalactosamine and D-galactosamine. The protein is D-tagatose-1,6-bisphosphate aldolase subunit KbaY (kbaY) of Escherichia coli.